A 385-amino-acid polypeptide reads, in one-letter code: tRNA-specific 2-thiouridylase MnmA (385 aa).

Residues 8 to 15 (AMSGGVDS) and leucine 34 contribute to the ATP site. The Nucleophile role is filled by cysteine 102. Cysteine 102 and cysteine 200 are oxidised to a cystine. Glycine 126 contributes to the ATP binding site. The tract at residues 150-152 (KDQ) is interaction with tRNA. Cysteine 200 serves as the catalytic Cysteine persulfide intermediate. An interaction with tRNA region spans residues 307–308 (RY).

The protein belongs to the MnmA/TRMU family.

Its subcellular location is the cytoplasm. The catalysed reaction is S-sulfanyl-L-cysteinyl-[protein] + uridine(34) in tRNA + AH2 + ATP = 2-thiouridine(34) in tRNA + L-cysteinyl-[protein] + A + AMP + diphosphate + H(+). Its function is as follows. Catalyzes the 2-thiolation of uridine at the wobble position (U34) of tRNA, leading to the formation of s(2)U34. This is tRNA-specific 2-thiouridylase MnmA from Heliobacterium modesticaldum (strain ATCC 51547 / Ice1).